The chain runs to 218 residues: Adenylate kinase (218 aa).

An ATP-binding site is contributed by 10–15; that stretch reads GAGKGT. The interval 30–59 is NMP; that stretch reads STGDMLRAAVKAGTPLGLEAKKVMDAGGLV. AMP-binding positions include threonine 31, arginine 36, 57-59, 85-88, and glutamine 92; these read GLV and GFPR. The tract at residues 122–159 is LID; that stretch reads ERRVHPASGRSYHVRFNPPKAEGVDDVTGEPLVQRDDD. Residues arginine 123 and 132–133 each bind ATP; that span reads SY. AMP is bound by residues arginine 156 and arginine 167. Glycine 203 is an ATP binding site.

The protein belongs to the adenylate kinase family. Monomer.

Its subcellular location is the cytoplasm. It carries out the reaction AMP + ATP = 2 ADP. Its pathway is purine metabolism; AMP biosynthesis via salvage pathway; AMP from ADP: step 1/1. In terms of biological role, catalyzes the reversible transfer of the terminal phosphate group between ATP and AMP. Plays an important role in cellular energy homeostasis and in adenine nucleotide metabolism. This chain is Adenylate kinase, found in Bordetella pertussis (strain Tohama I / ATCC BAA-589 / NCTC 13251).